Here is a 92-residue protein sequence, read N- to C-terminus: Small ribosomal subunit protein uS19 (92 aa).

The protein belongs to the universal ribosomal protein uS19 family.

In terms of biological role, protein S19 forms a complex with S13 that binds strongly to the 16S ribosomal RNA. This is Small ribosomal subunit protein uS19 from Listeria innocua serovar 6a (strain ATCC BAA-680 / CLIP 11262).